The following is a 101-amino-acid chain: Histone H1-like protein EM6 (101 aa).

2 stretches are compositionally biased toward basic residues: residues 1-35 (AKKR…HVRK) and 58-101 (AKKK…RRRR). A disordered region spans residues 1-101 (AKKRSRSRKR…SRTARSRRRR (101 aa)). 4 repeat units span residues 3-4 (KR), 5-6 (SR), 7-8 (SR), and 9-10 (KR). Residues 3-22 (KRSRSRKRSASRKRSRSRKR) are 10 X 2 AA approximate tandem repeats of [SK]-R. The 5; approximate repeat unit spans residues 11-12 (SA). 5 consecutive repeat copies span residues 13-14 (SR), 15-16 (KR), 17-18 (SR), 19-20 (SR), and 21-22 (KR). A globular region spans residues 32–65 (HVRKALAAGMKNHLLAHPKGSNNFILAKKKAPRR).

Sperm.

Its subcellular location is the nucleus. The protein resides in the chromosome. The chain is Histone H1-like protein EM6 from Ensis minor (Razor shell).